A 239-amino-acid chain; its full sequence is Cyclo(L-leucyl-L-phenylalanyl) synthase (239 aa).

The active-site Nucleophile is the serine 37. Substrate is bound by residues asparagine 40, 178–182 (YVLAE), and tyrosine 202.

The protein belongs to the CDPS family. In terms of assembly, monomer.

It catalyses the reaction L-phenylalanyl-tRNA(Phe) + L-leucyl-tRNA(Leu) = cyclo(L-phenylalanyl-L-leucyl) + tRNA(Phe) + tRNA(Leu) + H(+). Functionally, involved in the biosynthesis of albonoursin (cyclo[(alpha,beta-dehydro-Phe)-(alpha,beta-dehydro-Leu)]), an antibacterial peptide. It uses activated amino acids in the form of aminoacyl-tRNAs (aa-tRNAs) as substrates to catalyze the ATP-independent formation of cyclodipeptides which are intermediates in diketopiperazine (DKP) biosynthetic pathways. Catalyzes the formation of cyclo(L-Phe-L-Leu) (cFL) as major products from L-L-phenylalanyl-tRNA(Phe) and L-leucyl-tRNA(Leu). AlbC can also incorporate various nonpolar residues, such as L-phenylalanine, L-leucine, L-tyrosine and L-methionine, and to a much lesser extent L-alanine and L-valine, into cyclodipeptides. Indeed, ten possible cyclodipeptides composed of L-phenylalanine, L-leucine, L-tyrosine and L-methionine are all synthesized to detectable amounts by AlbC. The sequence is that of Cyclo(L-leucyl-L-phenylalanyl) synthase (albC) from Streptomyces noursei (Streptomyces albulus).